Consider the following 291-residue polypeptide: MGMDRSDMNKNLAQMLKGGVIMDVINKEQAIIAEKAGACAVMALERVPADIRKQGGVARMSDPKMIKEIRESVTIPVMAKVRIGHFVEAEILQSLGIDFIDESEVLTPADDSYHIDKKAFKVPFVCGARNLGEALRRIGEGASMIRTKGEAGTGNVVEAVKHMRTVMDEIRRVKNAAKEEIMTIAKELGAPYDLVQYVWMNGRLPVVNFAAGGVATPADAALMIRLGAEGVFVGSGIFKSENPEKRARAIVMAAAYYDDPKVLEEVSEDLGEPMYGLEISDIKDRYAERGW.

Asp-23 contributes to the D-ribose 5-phosphate binding site. The active-site Schiff-base intermediate with D-ribose 5-phosphate is Lys-80. D-ribose 5-phosphate is bound at residue Gly-152. Arg-164 is a D-glyceraldehyde 3-phosphate binding site. Residues Gly-213 and 234 to 235 contribute to the D-ribose 5-phosphate site; that span reads GS.

The protein belongs to the PdxS/SNZ family. As to quaternary structure, in the presence of PdxT, forms a dodecamer of heterodimers.

The catalysed reaction is aldehydo-D-ribose 5-phosphate + D-glyceraldehyde 3-phosphate + L-glutamine = pyridoxal 5'-phosphate + L-glutamate + phosphate + 3 H2O + H(+). It participates in cofactor biosynthesis; pyridoxal 5'-phosphate biosynthesis. Functionally, catalyzes the formation of pyridoxal 5'-phosphate from ribose 5-phosphate (RBP), glyceraldehyde 3-phosphate (G3P) and ammonia. The ammonia is provided by the PdxT subunit. Can also use ribulose 5-phosphate and dihydroxyacetone phosphate as substrates, resulting from enzyme-catalyzed isomerization of RBP and G3P, respectively. In Clostridium acetobutylicum (strain ATCC 824 / DSM 792 / JCM 1419 / IAM 19013 / LMG 5710 / NBRC 13948 / NRRL B-527 / VKM B-1787 / 2291 / W), this protein is Pyridoxal 5'-phosphate synthase subunit PdxS.